The following is a 271-amino-acid chain: tRNA (guanine-N(1)-)-methyltransferase (271 aa).

S-adenosyl-L-methionine-binding positions include Gly120 and Ile145 to Leu150.

This sequence belongs to the RNA methyltransferase TrmD family. Homodimer.

It localises to the cytoplasm. It carries out the reaction guanosine(37) in tRNA + S-adenosyl-L-methionine = N(1)-methylguanosine(37) in tRNA + S-adenosyl-L-homocysteine + H(+). Functionally, specifically methylates guanosine-37 in various tRNAs. This is tRNA (guanine-N(1)-)-methyltransferase from Bifidobacterium longum (strain NCC 2705).